The sequence spans 216 residues: Adenylate kinase (216 aa).

ATP is bound at residue 10–15 (GAGKGT). Residues 30–59 (STGDIFRKNIKEGTELGKKAKEYMDQGLLV) are NMP. Residues Thr31, Arg36, 57–59 (LLV), 85–88 (GFPR), and Gln92 each bind AMP. The LID stretch occupies residues 126-163 (GRRICKSCGATYHVEFNPPKVEGVCDVCQGELYQRADD). Arg127 contacts ATP. Residues Cys130 and Cys133 each coordinate Zn(2+). Residue 136–137 (TY) coordinates ATP. 2 residues coordinate Zn(2+): Cys150 and Cys153. 2 residues coordinate AMP: Arg160 and Arg171. Gln199 provides a ligand contact to ATP.

Belongs to the adenylate kinase family. Monomer.

The protein resides in the cytoplasm. It carries out the reaction AMP + ATP = 2 ADP. It participates in purine metabolism; AMP biosynthesis via salvage pathway; AMP from ADP: step 1/1. Catalyzes the reversible transfer of the terminal phosphate group between ATP and AMP. Plays an important role in cellular energy homeostasis and in adenine nucleotide metabolism. The protein is Adenylate kinase of Clostridioides difficile (strain 630) (Peptoclostridium difficile).